The sequence spans 159 residues: 2-C-methyl-D-erythritol 2,4-cyclodiphosphate synthase (159 aa).

2 residues coordinate a divalent metal cation: Asp10 and His12. 4-CDP-2-C-methyl-D-erythritol 2-phosphate-binding positions include 10 to 12 (DVH) and 36 to 37 (HS). Position 44 (His44) interacts with a divalent metal cation. 4-CDP-2-C-methyl-D-erythritol 2-phosphate contacts are provided by residues 58–60 (DIG), 63–67 (FSDTD), and Arg144.

This sequence belongs to the IspF family. As to quaternary structure, homotrimer. The cofactor is a divalent metal cation.

The enzyme catalyses 4-CDP-2-C-methyl-D-erythritol 2-phosphate = 2-C-methyl-D-erythritol 2,4-cyclic diphosphate + CMP. It participates in isoprenoid biosynthesis; isopentenyl diphosphate biosynthesis via DXP pathway; isopentenyl diphosphate from 1-deoxy-D-xylulose 5-phosphate: step 4/6. In terms of biological role, involved in the biosynthesis of isopentenyl diphosphate (IPP) and dimethylallyl diphosphate (DMAPP), two major building blocks of isoprenoid compounds. Catalyzes the conversion of 4-diphosphocytidyl-2-C-methyl-D-erythritol 2-phosphate (CDP-ME2P) to 2-C-methyl-D-erythritol 2,4-cyclodiphosphate (ME-CPP) with a corresponding release of cytidine 5-monophosphate (CMP). This Paraburkholderia phytofirmans (strain DSM 17436 / LMG 22146 / PsJN) (Burkholderia phytofirmans) protein is 2-C-methyl-D-erythritol 2,4-cyclodiphosphate synthase.